Here is a 737-residue protein sequence, read N- to C-terminus: SANT and BTB domain regulator of class switch recombination (737 aa).

The region spanning 21-59 is the SANT domain; that stretch reads DMILYPLIGIPQTINWETVARLVPGLTPKECVKRFDELK. One can recognise a BTB domain in the interval 147–255; sequence MVIHVCDEAK…QCIQYCHKNM (109 aa). Positions 555–576 are enriched in acidic residues; that stretch reads SEEEEYTTGSEVTEDEVGDEEE. The interval 555–618 is disordered; the sequence is SEEEEYTTGS…TLEKSTSRDV (64 aa). Positions 580–595 are enriched in basic residues; it reads KQRKKEKPKKFTKPPK. A compositionally biased stretch (basic and acidic residues) spans 604-615; it reads QKKEKTLEKSTS.

Belongs to the KIAA1841 family. Homodimer. Interacts (via the BTB domain) with HDAC1 and NCOR2.

In terms of biological role, negatively regulates class switch recombination or isotype switching in splenic B-cells. This Rattus norvegicus (Rat) protein is SANT and BTB domain regulator of class switch recombination.